A 486-amino-acid chain; its full sequence is MSPQTETKASVGFKAGVKEYKLTYYTPEYETKDTDILAAFRVTPQPGVPPEEAGAAVAAESSTGTWTTVWTDGLTSLDRYKGRCYHIEPVPGEESQFIAYVAYPLDLFEEGSVTNMFTSIVGNVFGFKALAALRLEDLRIPPAYTKTFQGPPHGIQVERDKLNKYGRPLLGCTIKPKLGLSAKNYGRAVYECLRGGLDFTKDDENVNSQPFMRWRDRFLFCAEAIYKSQAETGEIKGHYLNATAGTCEEMIKRAVFARELGVPIVMHDYLTGGFTANTSLAHYCRDNGLLLHIHRAMHAVIDRQKNHGMHFRVLAKALRLSGGDHIHAGTVVGKLEGDRESTLGFVDLLRDDYVEKDRSRGIFFTQDWVSLPGVLPVASGGIHVWHMPALTEIFGDDSVLQFGGGTLGHPWGNAPGAVANRVALEACVQARNEGRDLAVEGNEIIREACKWSPELAAACEVWKEIRFNFPTIDTIDKLDPSVDKVA.

Positions 1 to 2 are excised as a propeptide; that stretch reads MS. Substrate contacts are provided by Asn123 and Thr173. Lys175 serves as the catalytic Proton acceptor. Lys177 serves as a coordination point for substrate. Mg(2+) is bound by residues Lys201, Asp203, and Glu204. Lys201 carries the N6-carboxylysine modification. Ser208 is subject to Phosphoserine. His294 serves as the catalytic Proton acceptor. Substrate is bound by residues Arg295 and His327. The residue at position 330 (Thr330) is a Phosphothreonine. Substrate is bound at residue Ser379.

The protein belongs to the RuBisCO large chain family. Type I subfamily. As to quaternary structure, heterohexadecamer of 8 large chains and 8 small chains; disulfide-linked. The disulfide link is formed within the large subunit homodimers. Requires Mg(2+) as cofactor. Post-translationally, the disulfide bond which can form in the large chain dimeric partners within the hexadecamer appears to be associated with oxidative stress and protein turnover.

The protein localises to the plastid. It is found in the chloroplast. The catalysed reaction is 2 (2R)-3-phosphoglycerate + 2 H(+) = D-ribulose 1,5-bisphosphate + CO2 + H2O. It catalyses the reaction D-ribulose 1,5-bisphosphate + O2 = 2-phosphoglycolate + (2R)-3-phosphoglycerate + 2 H(+). RuBisCO catalyzes two reactions: the carboxylation of D-ribulose 1,5-bisphosphate, the primary event in carbon dioxide fixation, as well as the oxidative fragmentation of the pentose substrate in the photorespiration process. Both reactions occur simultaneously and in competition at the same active site. This chain is Ribulose bisphosphate carboxylase large chain, found in Aethionema grandiflorum (Persian stone-cress).